Reading from the N-terminus, the 207-residue chain is Probable nicotinate-nucleotide adenylyltransferase (207 aa).

This sequence belongs to the NadD family.

It carries out the reaction nicotinate beta-D-ribonucleotide + ATP + H(+) = deamido-NAD(+) + diphosphate. Its pathway is cofactor biosynthesis; NAD(+) biosynthesis; deamido-NAD(+) from nicotinate D-ribonucleotide: step 1/1. Its function is as follows. Catalyzes the reversible adenylation of nicotinate mononucleotide (NaMN) to nicotinic acid adenine dinucleotide (NaAD). This chain is Probable nicotinate-nucleotide adenylyltransferase, found in Synechococcus sp. (strain JA-3-3Ab) (Cyanobacteria bacterium Yellowstone A-Prime).